The primary structure comprises 291 residues: Beta-lactamase OXY-1 (291 aa).

The first 24 residues, methionine 1 to glycine 24, serve as a signal peptide directing secretion. Catalysis depends on serine 73, which acts as the Acyl-ester intermediate. Lysine 237 to glycine 239 serves as a coordination point for substrate.

The protein belongs to the class-A beta-lactamase family.

The enzyme catalyses a beta-lactam + H2O = a substituted beta-amino acid. Hydrolyzes broad-spectrum beta-lactam antibiotics. Active against cephalosporins. In Klebsiella oxytoca, this protein is Beta-lactamase OXY-1 (bla).